We begin with the raw amino-acid sequence, 121 residues long: Large ribosomal subunit protein uL18 (121 aa).

It belongs to the universal ribosomal protein uL18 family. As to quaternary structure, part of the 50S ribosomal subunit; part of the 5S rRNA/L5/L18/L25 subcomplex. Contacts the 5S and 23S rRNAs.

In terms of biological role, this is one of the proteins that bind and probably mediate the attachment of the 5S RNA into the large ribosomal subunit, where it forms part of the central protuberance. The chain is Large ribosomal subunit protein uL18 from Paraburkholderia phytofirmans (strain DSM 17436 / LMG 22146 / PsJN) (Burkholderia phytofirmans).